We begin with the raw amino-acid sequence, 491 residues long: V-type proton ATPase subunit B 1 (491 aa).

Arginine 380 lines the ATP pocket.

This sequence belongs to the ATPase alpha/beta chains family. V-ATPase is a heteromultimeric enzyme made up of two complexes: the ATP-hydrolytic V1 complex and the proton translocation V0 complex. The V1 complex consists of three catalytic AB heterodimers that form a heterohexamer, three peripheral stalks each consisting of EG heterodimers, one central rotor including subunits D and F, and the regulatory subunits C and H. The proton translocation complex V0 consists of the proton transport subunit a, a ring of proteolipid subunits c9c'', rotary subunit d, subunits e and f, and the accessory subunits vah-19/Ac45 and vah-20/PRR. In terms of tissue distribution, expressed ubiquitously. Highly expressed in the H-shaped excretory cell, the excretory pore, the intestine, and hypodermal cells. Expressed in the nervous system. Expressed at low levels in muscles.

Its function is as follows. Non-catalytic subunit of the V1 complex of vacuolar(H+)-ATPase (V-ATPase), a multisubunit enzyme composed of a peripheral complex (V1) that hydrolyzes ATP and a membrane integral complex (V0) that translocates protons. V-ATPase is responsible for acidifying and maintaining the pH of intracellular compartments and in some cell types, is targeted to the plasma membrane, where it is responsible for acidifying the extracellular environment. Essential for the proper assembly and activity of V-ATPase. Required maternally for early embryogenesis and zygotically during morphogenesis. Specifically, involved in the clearance of apoptotic cell corpses in embryos. Also, during embryonic development, the V-ATPase is required to repress fusion of epidermal cells probably by negatively regulating eff-1-mediated cell fusion. In neurons, required for necrotic cell death by promoting intracellular acidification. Required for cell death induced by hypoxia. Required for acidification of synaptic vesicles and the release of neurotransmitters from adult neurons. This is V-type proton ATPase subunit B 1 from Caenorhabditis elegans.